Here is an 854-residue protein sequence, read N- to C-terminus: Armadillo repeat-containing protein 2 (854 aa).

3 disordered regions span residues 1 to 116 (MLSS…SFPK), 140 to 194 (QGML…PLLT), and 206 to 255 (EVSL…ETDT). The span at 58–73 (PASSRSPENRPPSSFS) shows a compositional bias: low complexity. Polar residues-rich tracts occupy residues 74-87 (LHAS…SKPI) and 162-187 (KPVS…TGQL). ARM repeat units follow at residues 255-294 (TEVD…RTLE), 298-337 (MLGK…ALKV), 356-396 (EKND…ALKF), 401-442 (PGFL…HLLV), 455-496 (PLTR…KLTS), 499-540 (DCCA…NLTA), 544-583 (QARE…EAKP), 585-605 (AEAE…AIHP), 606-649 (RIGP…NLSF), 651-692 (QVKS…NLSQ), 694-733 (HDVC…NLTV), and 735-777 (KEKR…NFSE).

In terms of biological role, required for sperm flagellum axoneme organization and function. Involved in axonemal central pair complex assembly and/or stability. This chain is Armadillo repeat-containing protein 2, found in Mus musculus (Mouse).